The sequence spans 123 residues: Thioredoxin domain-containing protein 17 (123 aa).

N-acetylalanine is present on Ala-2. The region spanning 41 to 123 is the Thioredoxin domain; sequence SWCPDCVEAE…SLVEMIFSED (83 aa). Active-site nucleophile residues include Cys-43 and Cys-46. An intrachain disulfide couples Cys-43 to Cys-46.

It belongs to the thioredoxin family. As to quaternary structure, interacts with TRXR1 and DYNLL1/DNCL1. Post-translationally, the oxidized protein is reduced by TRXR1.

The protein resides in the cytoplasm. In terms of biological role, disulfide reductase. May participate in various redox reactions through the reversible oxidation of its active center dithiol to a disulfide and catalyze dithiol-disulfide exchange reactions. Modulates TNF-alpha signaling and NF-kappa-B activation. Has peroxidase activity and may contribute to the elimination of cellular hydrogen peroxide. This is Thioredoxin domain-containing protein 17 (Txndc17) from Mus musculus (Mouse).